Consider the following 172-residue polypeptide: MLPDKTALPIITLSQPTAEVGAQVHRLISKCPPLDPNSMYCNLLQSSHFSETAVAAKIGDELVGFVSGYRIPQRPDTLFVWQVAVGEKARGQGLATRMLKAILARPVNQDINRIETTITPNNKASWALFEGLAKKLDTQIGSAVMFDKTRHFADQHETEMLVKVGPFKAVQA.

Residues 11–165 (ITLSQPTAEV…HETEMLVKVG (155 aa)) enclose the N-acetyltransferase domain.

It belongs to the acetyltransferase family. EctA subfamily. Homodimer.

The enzyme catalyses L-2,4-diaminobutanoate + acetyl-CoA = (2S)-4-acetamido-2-aminobutanoate + CoA + H(+). The protein operates within amine and polyamine biosynthesis; ectoine biosynthesis; L-ectoine from L-aspartate 4-semialdehyde: step 2/3. With respect to regulation, inhibited by zinc and cadmium. Functionally, catalyzes the acetylation of L-2,4-diaminobutyrate (DABA) to gamma-N-acetyl-alpha,gamma-diaminobutyric acid (ADABA) with acetyl coenzyme A. In Methylotuvimicrobium alcaliphilum (strain DSM 19304 / NCIMB 14124 / VKM B-2133 / 20Z) (Methylomicrobium alcaliphilum), this protein is L-2,4-diaminobutyric acid acetyltransferase (ectA).